The sequence spans 194 residues: Threonylcarbamoyl-AMP synthase (194 aa).

In terms of domain architecture, YrdC-like spans 12-194; that stretch reads SPNMKDLLIQ…DVMTGKLIRE (183 aa).

It belongs to the SUA5 family. TsaC subfamily.

It localises to the cytoplasm. It carries out the reaction L-threonine + hydrogencarbonate + ATP = L-threonylcarbamoyladenylate + diphosphate + H2O. Its function is as follows. Required for the formation of a threonylcarbamoyl group on adenosine at position 37 (t(6)A37) in tRNAs that read codons beginning with adenine. Catalyzes the conversion of L-threonine, HCO(3)(-)/CO(2) and ATP to give threonylcarbamoyl-AMP (TC-AMP) as the acyladenylate intermediate, with the release of diphosphate. The chain is Threonylcarbamoyl-AMP synthase from Blochmanniella pennsylvanica (strain BPEN).